Here is a 607-residue protein sequence, read N- to C-terminus: Putative pentatricopeptide repeat-containing protein At1g09680 (607 aa).

9 PPR repeats span residues 239–273 (NVYVFNILMNKFCKEGNISDAQKVFDEITKRSLQP), 274–308 (TVVSFNTLINGYCKVGNLDEGFRLKHQMEKSRTRP), 309–343 (DVFTYSALINALCKENKMDGAHGLFDEMCKRGLIP), 344–378 (NDVIFTTLIHGHSRNGEIDLMKESYQKMLSKGLQP), 379–413 (DIVLYNTLVNGFCKNGDLVAARNIVDGMIRRGLRP), 414–448 (DKITYTTLIDGFCRGGDVETALEIRKEMDQNGIEL), 449–483 (DRVGFSALVCGMCKEGRVIDAERALREMLRAGIKP), 484–518 (DDVTYTMMMDAFCKKGDAQTGFKLLKEMQSDGHVP), and 519–553 (SVVTYNVLLNGLCKLGQMKNADMLLDAMLNIGVVP).

Belongs to the PPR family. P subfamily.

In Arabidopsis thaliana (Mouse-ear cress), this protein is Putative pentatricopeptide repeat-containing protein At1g09680.